A 258-amino-acid chain; its full sequence is Homeobox protein VENTX (258 aa).

The segment covering 1–32 has biased composition (polar residues); it reads MRLSSSPPRGPQQLSSFGSVDWLSQSSCSGPT. Disordered regions lie at residues 1–93 and 227–248; these read MRLS…RAPR and SHPP…PRGL. The homeobox DNA-binding region spans 91-150; sequence APRVRTAFTMEQVRTLEGVFQHHQYLSPLERKRLAREMQLSEVQIKTWFQNRRMKHKRQM.

Expressed in bone marrow of patients recovering from chemotherapy. Also expressed in an erythroleukemia cell line.

The protein localises to the nucleus. In terms of biological role, may be involved in ventralization. In Homo sapiens (Human), this protein is Homeobox protein VENTX (VENTX).